The sequence spans 127 residues: Fumarate reductase subunit C (127 aa).

Helical transmembrane passes span 30 to 50 (ATIL…GSLV), 67 to 87 (IVVA…QTFF), and 107 to 127 (VVVL…LVIV).

It belongs to the FrdC family. As to quaternary structure, part of an enzyme complex containing four subunits: a flavoprotein (FrdA), an iron-sulfur protein (FrdB), and two hydrophobic anchor proteins (FrdC and FrdD).

The protein resides in the cell inner membrane. Anchors the catalytic components of the fumarate reductase complex to the cell membrane, binds quinones. The sequence is that of Fumarate reductase subunit C from Aliivibrio salmonicida (strain LFI1238) (Vibrio salmonicida (strain LFI1238)).